A 142-amino-acid polypeptide reads, in one-letter code: DNA-directed RNA polymerases I and III subunit RPAC2 (142 aa).

The span at 1-11 (MTEDIEQKKTA) shows a compositional bias: basic and acidic residues. The disordered stretch occupies residues 1 to 45 (MTEDIEQKKTATEVTPQEPKHIQEEEEQDVDMTGDEEQEEEPDRE). A phosphothreonine mark is found at threonine 15 and threonine 33. A compositionally biased stretch (acidic residues) spans 24–42 (EEEEQDVDMTGDEEQEEEP). Lysine 134 participates in a covalent cross-link: Glycyl lysine isopeptide (Lys-Gly) (interchain with G-Cter in ubiquitin).

The protein belongs to the archaeal Rpo11/eukaryotic RPB11/RPC19 RNA polymerase subunit family. As to quaternary structure, component of the RNA polymerase I (Pol I) and RNA polymerase III (Pol III) complexes. Component of the RNA polymerase I (Pol I) complex consisting of 14 subunits: RPA135, RPA190, RPC40, RPA14, RPB5, RPO26, RPA43, RPB8, RPA12, RPB10, RPC19, RPC10, RPA49 and RPA34. The complex is composed of a horseshoe-shaped core containing ten subunits (RPA135, RPA190, RPB5, RPO26, RPB8, RPB10, RPC10, RPA12, RPC19 and RPC40) where RPA135 and RPA190 form the DNA-binding cleft. Outside of the core, RPA14 and RPA43 form the stalk that mediates interactions with transcription initiation factors and newly synthesized RNA. Component of the RNA polymerase III (Pol III) complex consisting of 17 subunits. Directly interacts with the RPC40 subunit.

The protein localises to the nucleus. The protein resides in the nucleolus. In terms of biological role, DNA-dependent RNA polymerases catalyze the transcription of DNA into RNA using the four ribonucleoside triphosphates as substrates. Common core component of RNA polymerases I and III which synthesize ribosomal RNA precursors and small RNAs, such as 5S rRNA and tRNAs, respectively. This chain is DNA-directed RNA polymerases I and III subunit RPAC2 (RPC19), found in Saccharomyces cerevisiae (strain ATCC 204508 / S288c) (Baker's yeast).